A 257-amino-acid polypeptide reads, in one-letter code: Protein orai-2 (257 aa).

4 helical membrane passes run Thr-67–Leu-84, Leu-95–Ile-115, Leu-149–Leu-169, and Ala-199–Ile-219.

Belongs to the Orai family.

It is found in the membrane. Its function is as follows. Ca(2+) release-activated Ca(2+)-like (CRAC-like) channel subunit which mediates Ca(2+) influx and increase in Ca(2+)-selective current by synergy with the Ca(2+) sensor, STIM1. In Gallus gallus (Chicken), this protein is Protein orai-2 (ORAI2).